Consider the following 328-residue polypeptide: Methionyl-tRNA formyltransferase (328 aa).

Position 110–113 (110–113 (SLLP)) interacts with (6S)-5,6,7,8-tetrahydrofolate.

The protein belongs to the Fmt family.

The catalysed reaction is L-methionyl-tRNA(fMet) + (6R)-10-formyltetrahydrofolate = N-formyl-L-methionyl-tRNA(fMet) + (6S)-5,6,7,8-tetrahydrofolate + H(+). Attaches a formyl group to the free amino group of methionyl-tRNA(fMet). The formyl group appears to play a dual role in the initiator identity of N-formylmethionyl-tRNA by promoting its recognition by IF2 and preventing the misappropriation of this tRNA by the elongation apparatus. This is Methionyl-tRNA formyltransferase from Prochlorococcus marinus (strain MIT 9215).